A 634-amino-acid polypeptide reads, in one-letter code: Chaperone protein HtpG (634 aa).

Positions 1–344 are a; substrate-binding; sequence MNETVANNKE…SNDLPLNVSR (344 aa). The b stretch occupies residues 345 to 561; the sequence is EILQDNKVTQ…DFEMGTQMAK (217 aa). The tract at residues 562 to 634 is c; the sequence is LLAAAGQAVP…TAINSLLTKG (73 aa).

It belongs to the heat shock protein 90 family. In terms of assembly, homodimer.

Its subcellular location is the cytoplasm. Its function is as follows. Molecular chaperone. Has ATPase activity. This Vibrio vulnificus (strain CMCP6) protein is Chaperone protein HtpG.